A 224-amino-acid chain; its full sequence is Deoxyribose-phosphate aldolase (224 aa).

The Proton donor/acceptor role is filled by Asp-92. Lys-154 acts as the Schiff-base intermediate with acetaldehyde in catalysis. Residue Lys-183 is the Proton donor/acceptor of the active site.

It belongs to the DeoC/FbaB aldolase family. DeoC type 1 subfamily.

It localises to the cytoplasm. It catalyses the reaction 2-deoxy-D-ribose 5-phosphate = D-glyceraldehyde 3-phosphate + acetaldehyde. It participates in carbohydrate degradation; 2-deoxy-D-ribose 1-phosphate degradation; D-glyceraldehyde 3-phosphate and acetaldehyde from 2-deoxy-alpha-D-ribose 1-phosphate: step 2/2. Functionally, catalyzes a reversible aldol reaction between acetaldehyde and D-glyceraldehyde 3-phosphate to generate 2-deoxy-D-ribose 5-phosphate. This is Deoxyribose-phosphate aldolase from Histophilus somni (strain 129Pt) (Haemophilus somnus).